We begin with the raw amino-acid sequence, 224 residues long: DNA repair and recombination protein RadB (224 aa).

This sequence belongs to the eukaryotic RecA-like protein family. RadB subfamily.

Involved in DNA repair and in homologous recombination. May regulate the cleavage reactions of the branch-structured DNA. Has a very weak ATPase activity that is not stimulated by DNA. Binds DNA but does not promote DNA strands exchange. This chain is DNA repair and recombination protein RadB, found in Methanoculleus marisnigri (strain ATCC 35101 / DSM 1498 / JR1).